A 33-amino-acid polypeptide reads, in one-letter code: Photosystem II reaction center protein Psb30 (33 aa).

A helical membrane pass occupies residues 5–25 (VVVQLGSLSLIVLAGPIIVLL).

The protein belongs to the Psb30/Ycf12 family. PSII is composed of 1 copy each of membrane proteins PsbA, PsbB, PsbC, PsbD, PsbE, PsbF, PsbH, PsbI, PsbJ, PsbK, PsbL, PsbM, PsbT, PsbX, PsbY, PsbZ, Psb30/Ycf12, peripheral proteins of the oxygen-evolving complex and a large number of cofactors. It forms dimeric complexes.

It localises to the plastid. The protein localises to the chloroplast thylakoid membrane. Its function is as follows. A core subunit of photosystem II (PSII), probably helps stabilize the reaction center. In Mesostigma viride (Green alga), this protein is Photosystem II reaction center protein Psb30.